The primary structure comprises 454 residues: MFDLDKFWQFFNAEMKKSYSTVAYNAWFKNTKPISFNKKTKEMIIAVESPVAKGYWEKNLASQLIQEAYAYADMEIQPKFEVAGKEGPERLVTPQPRIKTNQEILENRRDEFAQDLQLNSKYTFDTFVQGEGNKLAAGAALAVADNPGSFYNPLFIFGGVGLGKTHLMQAIGHQMLAEKPHAKVVYIQSETFVNDFINSIKNKTQAEFRNKYRNCDLLLVDDIQFFSKKEGIQEEFFHTFETLYNDQKQIVMTSDRLPTEIPELSERLVSRFAWGLQVEITPPDLETRIAILRKKAETDGLAIDDSTLDYIASQVDTNIRELEGALVKVQAHATIEREDINVDLAKEALADLKLVQKNRGLQISKIQEVVANYFQTSTTELKGKKRVKQIVVPRQIAMYLSRELTDSSLPKIGQEFGGKDHTTVMHACDKISRALKTDAEIKAAVYDLKAMLEH.

Residues 1-74 form a domain I, interacts with DnaA modulators region; that stretch reads MFDLDKFWQF…IQEAYAYADM (74 aa). Positions 74–116 are domain II; sequence MEIQPKFEVAGKEGPERLVTPQPRIKTNQEILENRRDEFAQDL. Positions 117 to 333 are domain III, AAA+ region; sequence QLNSKYTFDT…GALVKVQAHA (217 aa). ATP contacts are provided by Gly-161, Gly-163, Lys-164, and Thr-165. Residues 334-454 form a domain IV, binds dsDNA region; sequence TIEREDINVD…VYDLKAMLEH (121 aa).

The protein belongs to the DnaA family. As to quaternary structure, oligomerizes as a right-handed, spiral filament on DNA at oriC.

Its subcellular location is the cytoplasm. Plays an essential role in the initiation and regulation of chromosomal replication. ATP-DnaA binds to the origin of replication (oriC) to initiate formation of the DNA replication initiation complex once per cell cycle. Binds the DnaA box (a 9 base pair repeat at the origin) and separates the double-stranded (ds)DNA. Forms a right-handed helical filament on oriC DNA; dsDNA binds to the exterior of the filament while single-stranded (ss)DNA is stabiized in the filament's interior. The ATP-DnaA-oriC complex binds and stabilizes one strand of the AT-rich DNA unwinding element (DUE), permitting loading of DNA polymerase. After initiation quickly degrades to an ADP-DnaA complex that is not apt for DNA replication. Binds acidic phospholipids. In Lactobacillus johnsonii (strain CNCM I-12250 / La1 / NCC 533), this protein is Chromosomal replication initiator protein DnaA.